Here is a 176-residue protein sequence, read N- to C-terminus: Flavodoxin 1 (176 aa).

The Flavodoxin-like domain occupies 4–165 (HGIFFGSDTG…RVEKWVKQIS (162 aa)).

The protein belongs to the flavodoxin family. FMN serves as cofactor.

In terms of biological role, low-potential electron donor to a number of redox enzymes. This Shigella flexneri protein is Flavodoxin 1 (fldA).